A 370-amino-acid chain; its full sequence is MNIIVSGGGTGGHIYPAISLIEELKKRDKDNKILYVGTEKGLESSIVPKLGIDFKTIHVRGIPRKINANSFKALKELFQGLREANKILKEFKPDLVIGTGGYVSGPILYKATKTKAKVAFHEQNSFPGITNRILSRYVDKYFVTFKESIKYFKNQDKAVVTGNPIRNRFTDIEKNKKSALEQYDISENKKVVFIFGGSNGSEILNKATLNMIEKISNQDKFEIVLATGKLNYDEFIQQSGKEIKNLHVYPYIDDIDKAYAVSDLIVTSSGAITLAELSFLGKASILVPKAYTTENHQEHNARAFEKNGASKVILEKDLNSDTLFDQINEILSDDNLLNELSENSKKMSYPTACKDIVDELYRLVEQDEKA.

Residues 10–12 (TGG), Asn124, Arg166, Ser198, Ile252, and Gln297 each bind UDP-N-acetyl-alpha-D-glucosamine.

Belongs to the glycosyltransferase 28 family. MurG subfamily.

The protein resides in the cell membrane. The enzyme catalyses di-trans,octa-cis-undecaprenyl diphospho-N-acetyl-alpha-D-muramoyl-L-alanyl-D-glutamyl-meso-2,6-diaminopimeloyl-D-alanyl-D-alanine + UDP-N-acetyl-alpha-D-glucosamine = di-trans,octa-cis-undecaprenyl diphospho-[N-acetyl-alpha-D-glucosaminyl-(1-&gt;4)]-N-acetyl-alpha-D-muramoyl-L-alanyl-D-glutamyl-meso-2,6-diaminopimeloyl-D-alanyl-D-alanine + UDP + H(+). It participates in cell wall biogenesis; peptidoglycan biosynthesis. Its function is as follows. Cell wall formation. Catalyzes the transfer of a GlcNAc subunit on undecaprenyl-pyrophosphoryl-MurNAc-pentapeptide (lipid intermediate I) to form undecaprenyl-pyrophosphoryl-MurNAc-(pentapeptide)GlcNAc (lipid intermediate II). The chain is UDP-N-acetylglucosamine--N-acetylmuramyl-(pentapeptide) pyrophosphoryl-undecaprenol N-acetylglucosamine transferase from Finegoldia magna (strain ATCC 29328 / DSM 20472 / WAL 2508) (Peptostreptococcus magnus).